Here is a 353-residue protein sequence, read N- to C-terminus: Photosystem II protein D1 (353 aa).

T2 carries the N-acetylthreonine modification. T2 carries the post-translational modification Phosphothreonine. The next 3 membrane-spanning stretches (helical) occupy residues 29 to 46 (YVGW…TAVS), 118 to 133 (HFFL…EWEL), and 142 to 156 (WIAV…AATA). Chlorophyll a is bound at residue H118. Residue Y126 participates in pheophytin a binding. The [CaMn4O5] cluster site is built by D170 and E189. A helical transmembrane segment spans residues 197 to 218 (FHMLGVAGVFGGSLFSAMHGSL). H198 lines the chlorophyll a pocket. A quinone-binding positions include H215 and 264–265 (SF). H215 contributes to the Fe cation binding site. A Fe cation-binding site is contributed by H272. The chain crosses the membrane as a helical span at residues 274-288 (FLAAWPVVGIWFTAL). Residues H332, E333, D342, and A344 each contribute to the [CaMn4O5] cluster site. Residues 345–353 (SVEAPSING) constitute a propeptide that is removed on maturation.

The protein belongs to the reaction center PufL/M/PsbA/D family. As to quaternary structure, PSII is composed of 1 copy each of membrane proteins PsbA, PsbB, PsbC, PsbD, PsbE, PsbF, PsbH, PsbI, PsbJ, PsbK, PsbL, PsbM, PsbT, PsbX, PsbY, PsbZ, Psb30/Ycf12, at least 3 peripheral proteins of the oxygen-evolving complex and a large number of cofactors. It forms dimeric complexes. The D1/D2 heterodimer binds P680, chlorophylls that are the primary electron donor of PSII, and subsequent electron acceptors. It shares a non-heme iron and each subunit binds pheophytin, quinone, additional chlorophylls, carotenoids and lipids. D1 provides most of the ligands for the Mn4-Ca-O5 cluster of the oxygen-evolving complex (OEC). There is also a Cl(-1) ion associated with D1 and D2, which is required for oxygen evolution. The PSII complex binds additional chlorophylls, carotenoids and specific lipids. serves as cofactor. In terms of processing, tyr-161 forms a radical intermediate that is referred to as redox-active TyrZ, YZ or Y-Z. Post-translationally, C-terminally processed by CTPA; processing is essential to allow assembly of the oxygen-evolving complex and thus photosynthetic growth.

The protein resides in the plastid. It is found in the chloroplast thylakoid membrane. It catalyses the reaction 2 a plastoquinone + 4 hnu + 2 H2O = 2 a plastoquinol + O2. Photosystem II (PSII) is a light-driven water:plastoquinone oxidoreductase that uses light energy to abstract electrons from H(2)O, generating O(2) and a proton gradient subsequently used for ATP formation. It consists of a core antenna complex that captures photons, and an electron transfer chain that converts photonic excitation into a charge separation. The D1/D2 (PsbA/PsbD) reaction center heterodimer binds P680, the primary electron donor of PSII as well as several subsequent electron acceptors. The polypeptide is Photosystem II protein D1 (Tupiella akineta (Green alga)).